The primary structure comprises 376 residues: Immunoglobulin G-binding protein H (376 aa).

An N-terminal signal peptide occupies residues 1–41; that stretch reads MTRQQTKKNYSLRKLKTGTASVAVALTVLGAGFANQTTVKA. Positions 69 to 271 are disordered; sequence TSLENEKLKS…AAKKELEANH (203 aa). Basic and acidic residues-rich tracts occupy residues 72 to 146, 156 to 203, 211 to 245, and 253 to 271; these read ENEK…KRYQ, ETEK…DKQI, LSRDLEASRAAKKELEANHQKLEAEHQKLKEDKQI, and LSRDLEASRAAKKELEANH. C repeat units lie at residues 153 to 187, 195 to 229, and 237 to 271; these read QQLETEKQISEASRKSLSRDLEASRAAKKDLEAEH and QKLKEDKQISDASRQGLSRDLEASRAAKKELEANH. D repeat units follow at residues 272 to 277, 278 to 283, 286 to 291, and 293 to 298; these read QKLEAE, AKALKE, AKQAEE, and AKLRAG. Residues 292 to 348 form a disordered region; that stretch reads LAKLRAGKASDSQTPDTKPGNKAVPGKGQAPQAGTKPNQNKAPMKETKRQLPSTGET. The LPXTG sorting signal signature appears at 342–346; sequence LPSTG. Threonine 345 carries the post-translational modification Pentaglycyl murein peptidoglycan amidated threonine. The propeptide at 346 to 376 is removed by sortase; it reads GETANPFFTAAALTVMATAGVAAVVKRKEEN.

Belongs to the M protein family.

Its subcellular location is the secreted. It is found in the cell wall. The protein is Immunoglobulin G-binding protein H of Streptococcus pyogenes serotype M1.